Here is a 32-residue protein sequence, read N- to C-terminus: Turripeptide XIV-18 (32 aa).

The residue at position 30 (isoleucine 30) is an Isoleucine amide.

Contains 2 disulfide bonds. As to expression, expressed by the venom duct.

The protein resides in the secreted. This chain is Turripeptide XIV-18, found in Gemmula speciosa (Splendid gem-turris).